Reading from the N-terminus, the 354-residue chain is MRKRISAIIMTLFMVLVSCNSGGVAEDPKTVYLTSIANLGKGFLDVFVTFGDMVTGAFGIKADTKKSDIGKYFTDIEKTMTSVKKKLQDEVVKNGNYAKVKTVVAKFIEEVLDKIAAGAKEAAKGATGSDAIGNAVHNQDAVAADATSVNALVKGIGEIVEVVLKDGEGDAGATKTGDTEKKSIGKLFAKKDDDRAQEAEASAANASIGAVSGADILKAIAKSGEIADNNKNIEEAKDAASIAAAKQTDDKKEIKDEAAKKDAVIAAGIALRAMAKGGKFTAKQNEEKSANAVNGAAASAVGKTLSTLIIAIRNTVDSGLKTINEALATVKQEDKSVEATNTAEATTSGQQAKN.

An N-terminal signal peptide occupies residues 1-18 (MRKRISAIIMTLFMVLVS). A lipid anchor (N-palmitoyl cysteine) is attached at Cys-19. Cys-19 carries the S-diacylglycerol cysteine lipid modification. The interval 333-354 (EDKSVEATNTAEATTSGQQAKN) is disordered. A compositionally biased stretch (polar residues) spans 338 to 354 (EATNTAEATTSGQQAKN).

The protein belongs to the variable large protein (Vlp) family. Delta subfamily.

It localises to the cell outer membrane. In terms of biological role, the Vlp and Vsp proteins are antigenically distinct proteins, only one vlp or vsp gene is transcriptionally active at any one time. Switching between these genes is a mechanism of host immune response evasion. The chain is Variable large protein 15/16 from Borrelia hermsii.